A 359-amino-acid chain; its full sequence is MEIYADQKYTKLVSHLYYQNSHEIVHSSKIYQLALTNPDILSQYINYPDESNESHESHDCHESQNSTHYKFRLMEIYHKMIIIDNNMDLLDLLFEIMSDDFRCDDCVILDLAIRHQRTDVFNKYIILGFDLNRLINSSTILDEIILWYHQIKKYDTGIELCDYLIDNGASISIHNYCTIINAFDTLNDKYVSFFLNKISLNDLGNLLFWYLRNYYNVNIDIVETILSNGIDINNFHEYSYMLIGKFNVPIMNLFIRYGLIIHDDVIDDACRYGNHLLVDYLMEIGHKPSKQIITNVIENHNVNIIKLFVKYNIDLSDIKPPTSPEIIQLVKSLESNGLSVDYVYGYILDKFNLSGKLCI.

ANK repeat units lie at residues 72–103 (RLME…DFRC), 105–133 (DCVI…DLNR), 142–173 (DEII…SISI), 203–234 (LGNL…DINN), 236–260 (HEYS…YGLI), 261–287 (IHDD…IGHK), and 288–317 (PSKQ…DLSD).

The chain is Putative ankyrin repeat protein R190 from Acanthamoeba polyphaga (Amoeba).